The following is a 151-amino-acid chain: Large ribosomal subunit protein bL9 (151 aa).

Belongs to the bacterial ribosomal protein bL9 family.

Its function is as follows. Binds to the 23S rRNA. The chain is Large ribosomal subunit protein bL9 from Dehalococcoides mccartyi (strain ATCC BAA-2266 / KCTC 15142 / 195) (Dehalococcoides ethenogenes (strain 195)).